Consider the following 264-residue polypeptide: Small ribosomal subunit protein eS1 (264 aa).

Position 34 is an N6-acetyllysine; alternate (lysine 34). A Glycyl lysine isopeptide (Lys-Gly) (interchain with G-Cter in SUMO2); alternate cross-link involves residue lysine 34. The residue at position 56 (lysine 56) is an N6-acetyllysine. Tyrosine 155 carries the ADP-ribosyltyrosine modification. A disordered region spans residues 232-264; the sequence is HGEGSSSGKATGDETGAKVERADGYEPPVQESV. Phosphoserine occurs at positions 236 and 237. The segment covering 242 to 255 has biased composition (basic and acidic residues); sequence TGDETGAKVERADG. Lysine 249 carries the N6-acetyllysine; alternate modification. A Glycyl lysine isopeptide (Lys-Gly) (interchain with G-Cter in SUMO2); alternate cross-link involves residue lysine 249. Residue tyrosine 256 is modified to Phosphotyrosine. At serine 263 the chain carries Phosphoserine.

This sequence belongs to the eukaryotic ribosomal protein eS1 family. Component of the small ribosomal subunit. Mature ribosomes consist of a small (40S) and a large (60S) subunit. The 40S subunit contains about 33 different proteins and 1 molecule of RNA (18S). The 60S subunit contains about 49 different proteins and 3 molecules of RNA (28S, 5.8S and 5S). Identified in a IGF2BP1-dependent mRNP granule complex containing untranslated mRNAs. Binds with high affinity to IPO4. Interacts with DDIT3. Part of the small subunit (SSU) processome, composed of more than 70 proteins and the RNA chaperone small nucleolar RNA (snoRNA) U3. ADP-ribosylated at Tyr-155 by PARP1 in presence of HPF1.

Its subcellular location is the cytoplasm. It is found in the nucleus. The protein resides in the nucleolus. Functionally, component of the small ribosomal subunit. The ribosome is a large ribonucleoprotein complex responsible for the synthesis of proteins in the cell. Part of the small subunit (SSU) processome, first precursor of the small eukaryotic ribosomal subunit. During the assembly of the SSU processome in the nucleolus, many ribosome biogenesis factors, an RNA chaperone and ribosomal proteins associate with the nascent pre-rRNA and work in concert to generate RNA folding, modifications, rearrangements and cleavage as well as targeted degradation of pre-ribosomal RNA by the RNA exosome. May play a role during erythropoiesis through regulation of transcription factor DDIT3. In Macaca fascicularis (Crab-eating macaque), this protein is Small ribosomal subunit protein eS1.